Consider the following 331-residue polypeptide: ATP-dependent 6-phosphofructokinase (331 aa).

ATP is bound at residue glycine 12. Residues 22 to 26 and 55 to 60 contribute to the ADP site; these read RGVVR and RYSVSD. Residues 73–74 and 103–106 each bind ATP; these read RF and GDGS. Aspartate 104 is a Mg(2+) binding site. 127–129 is a binding site for substrate; the sequence is TID. The active-site Proton acceptor is aspartate 129. Arginine 156 is an ADP binding site. Substrate-binding positions include arginine 164 and 171–173; that span reads MGR. Residues 187–189, lysine 213, and 215–217 contribute to the ADP site; these read GCE and KKH. Residues glutamate 224, arginine 245, and 251–254 each bind substrate; that span reads HIQR.

The protein belongs to the phosphofructokinase type A (PFKA) family. ATP-dependent PFK group I subfamily. Prokaryotic clade 'B1' sub-subfamily. In terms of assembly, homotetramer. It depends on Mg(2+) as a cofactor.

Its subcellular location is the cytoplasm. The catalysed reaction is beta-D-fructose 6-phosphate + ATP = beta-D-fructose 1,6-bisphosphate + ADP + H(+). The protein operates within carbohydrate degradation; glycolysis; D-glyceraldehyde 3-phosphate and glycerone phosphate from D-glucose: step 3/4. With respect to regulation, allosterically activated by ADP and other diphosphonucleosides, and allosterically inhibited by phosphoenolpyruvate. Catalyzes the phosphorylation of D-fructose 6-phosphate to fructose 1,6-bisphosphate by ATP, the first committing step of glycolysis. The chain is ATP-dependent 6-phosphofructokinase from Yersinia enterocolitica serotype O:8 / biotype 1B (strain NCTC 13174 / 8081).